Here is a 225-residue protein sequence, read N- to C-terminus: 2-C-methyl-D-erythritol 4-phosphate cytidylyltransferase (225 aa).

Belongs to the IspD/TarI cytidylyltransferase family. IspD subfamily.

It catalyses the reaction 2-C-methyl-D-erythritol 4-phosphate + CTP + H(+) = 4-CDP-2-C-methyl-D-erythritol + diphosphate. The protein operates within isoprenoid biosynthesis; isopentenyl diphosphate biosynthesis via DXP pathway; isopentenyl diphosphate from 1-deoxy-D-xylulose 5-phosphate: step 2/6. In terms of biological role, catalyzes the formation of 4-diphosphocytidyl-2-C-methyl-D-erythritol from CTP and 2-C-methyl-D-erythritol 4-phosphate (MEP). The sequence is that of 2-C-methyl-D-erythritol 4-phosphate cytidylyltransferase from Clostridium perfringens (strain ATCC 13124 / DSM 756 / JCM 1290 / NCIMB 6125 / NCTC 8237 / Type A).